The chain runs to 281 residues: Undecaprenyl-diphosphatase (281 aa).

A run of 7 helical transmembrane segments spans residues 49-69 (SANTFKIVIQLGSIFAAAWIF), 92-112 (LHIFIGLIPAGIMGLLFDDFI), 116-136 (LFSVPTVLIGLALGALLMIAA), 152-172 (MTYKQALIIGVAQCLALWPGF), 196-216 (TFIMAVPIMFAASAKSLASNI), 224-244 (ILFYIVGFIAAFIFGVLSIRL), and 257-277 (FAIYRLILVAVIAVLYFGFGI).

This sequence belongs to the UppP family.

The protein localises to the cell membrane. The catalysed reaction is di-trans,octa-cis-undecaprenyl diphosphate + H2O = di-trans,octa-cis-undecaprenyl phosphate + phosphate + H(+). In terms of biological role, catalyzes the dephosphorylation of undecaprenyl diphosphate (UPP). Confers resistance to bacitracin. The polypeptide is Undecaprenyl-diphosphatase (Macrococcus caseolyticus (strain JCSC5402) (Macrococcoides caseolyticum)).